Reading from the N-terminus, the 120-residue chain is NAD(P)H-quinone oxidoreductase subunit 3, chloroplastic (120 aa).

A run of 3 helical transmembrane segments spans residues 9-29 (IFWA…WISA), 64-84 (MFAL…PWAM), and 88-108 (VLGI…VVGL).

The protein belongs to the complex I subunit 3 family. In terms of assembly, NDH is composed of at least 16 different subunits, 5 of which are encoded in the nucleus.

Its subcellular location is the plastid. It localises to the chloroplast thylakoid membrane. It catalyses the reaction a plastoquinone + NADH + (n+1) H(+)(in) = a plastoquinol + NAD(+) + n H(+)(out). The enzyme catalyses a plastoquinone + NADPH + (n+1) H(+)(in) = a plastoquinol + NADP(+) + n H(+)(out). Functionally, NDH shuttles electrons from NAD(P)H:plastoquinone, via FMN and iron-sulfur (Fe-S) centers, to quinones in the photosynthetic chain and possibly in a chloroplast respiratory chain. The immediate electron acceptor for the enzyme in this species is believed to be plastoquinone. Couples the redox reaction to proton translocation, and thus conserves the redox energy in a proton gradient. The polypeptide is NAD(P)H-quinone oxidoreductase subunit 3, chloroplastic (Oryza nivara (Indian wild rice)).